The sequence spans 703 residues: Fanconi-associated nuclease 1 homolog (703 aa).

Residues Glu529, Asp651, Glu666, and Val667 each coordinate Mn(2+). In terms of domain architecture, VRR-NUC spans 597–698; sequence YIREHQRKTF…EVDVEVCHVS (102 aa).

The protein belongs to the FAN1 family. The cofactor is Mn(2+). Requires Mg(2+) as cofactor.

It is found in the nucleus. The catalysed reaction is Hydrolytically removes 5'-nucleotides successively from the 3'-hydroxy termini of 3'-hydroxy-terminated oligonucleotides.. Its function is as follows. Nuclease required for the repair of DNA interstrand cross-links (ICL). Acts as a 5'-3' exonuclease that anchors at a cut end of DNA and cleaves DNA successively at every third nucleotide, allowing to excise an ICL from one strand through flanking incisions. This Schizosaccharomyces pombe (strain 972 / ATCC 24843) (Fission yeast) protein is Fanconi-associated nuclease 1 homolog.